We begin with the raw amino-acid sequence, 191 residues long: Small ribosomal subunit protein uS11m (191 aa).

The tract at residues 37–62 (PRLEDSAARQNTEREAAPSRFSLYPP) is disordered. Over residues 38–53 (RLEDSAARQNTEREAA) the composition is skewed to basic and acidic residues.

The protein belongs to the universal ribosomal protein uS11 family. In terms of assembly, component of the mitochondrial ribosome small subunit (28S) which comprises a 12S rRNA and about 30 distinct proteins.

Its subcellular location is the mitochondrion. This Mus musculus (Mouse) protein is Small ribosomal subunit protein uS11m (Mrps11).